A 328-amino-acid chain; its full sequence is L-lactate dehydrogenase (328 aa).

NAD(+) is bound by residues V18, E39, K46, Y71, and 85–86 (GA). Q88 and R94 together coordinate substrate. Residues S107, 124–126 (AAN), and S149 contribute to the NAD(+) site. 126–129 (NPVD) serves as a coordination point for substrate. Position 154–157 (154–157 (DSAR)) interacts with substrate. Positions 159 and 174 each coordinate beta-D-fructose 1,6-bisphosphate. H181 functions as the Proton acceptor in the catalytic mechanism. Y226 carries the post-translational modification Phosphotyrosine. A substrate-binding site is contributed by T235.

The protein belongs to the LDH/MDH superfamily. LDH family. As to quaternary structure, homotetramer.

It localises to the cytoplasm. It catalyses the reaction (S)-lactate + NAD(+) = pyruvate + NADH + H(+). Its pathway is fermentation; pyruvate fermentation to lactate; (S)-lactate from pyruvate: step 1/1. Allosterically activated by fructose 1,6-bisphosphate (FBP). In terms of biological role, catalyzes the conversion of lactate to pyruvate. The sequence is that of L-lactate dehydrogenase from Streptococcus pneumoniae (strain 70585).